The chain runs to 288 residues: POU domain class 2-associating factor 2 (288 aa).

The OCA domain maps to 10–32 (KRVYQGVRVKHTVKDLLAEKRSG). 2 disordered regions span residues 24–52 (DLLA…PFVQ) and 247–274 (PPKV…VKED). Over residues 35–48 (SNSRLNGSVSSSQS) the composition is skewed to low complexity.

This sequence belongs to the POU2AF family. As to quaternary structure, interacts with POU2F3 (via the POU domain) in a DNA-dependent manner; this interaction recruits POU2AF2 to chromatin and increases POU2F3 transactivation activity. In terms of tissue distribution, expressed in tuft cells of colon mucosa, as well as in small intestine and thymus.

Its subcellular location is the cytoplasm. The protein resides in the cytosol. It is found in the nucleus. Transcriptional coactivator of POU2F3. This complex drives the development of tuft cells, a rare chemosensory cells that coordinate immune and neural functions within mucosal epithelial tissues. The polypeptide is POU domain class 2-associating factor 2 (Homo sapiens (Human)).